The chain runs to 660 residues: Bifunctional polymyxin resistance protein ArnA (660 aa).

The tract at residues 1 to 304 is formyltransferase ArnAFT; the sequence is MKAVIFAYHD…TLGLVAGARL (304 aa). H104 (proton donor; for formyltransferase activity) is an active-site residue. (6R)-10-formyltetrahydrofolate contacts are provided by residues R114 and 136–140; that span reads VKRAD. Positions 314-660 are dehydrogenase ArnADH; that stretch reads RRIRVLILGV…RSVDVAERAS (347 aa). NAD(+)-binding positions include D347 and 368 to 369; that span reads DI. UDP-alpha-D-glucuronate-binding positions include A393, Y398, and 432 to 433; that span reads TS. E434 (proton acceptor; for decarboxylase activity) is an active-site residue. UDP-alpha-D-glucuronate contacts are provided by residues R460, N492, 526-535, and Y613; that span reads KLIDGGQQKR. The active-site Proton donor; for decarboxylase activity is R619.

In the N-terminal section; belongs to the Fmt family. UDP-L-Ara4N formyltransferase subfamily. The protein in the C-terminal section; belongs to the NAD(P)-dependent epimerase/dehydratase family. UDP-glucuronic acid decarboxylase subfamily. Homohexamer, formed by a dimer of trimers.

The enzyme catalyses UDP-alpha-D-glucuronate + NAD(+) = UDP-beta-L-threo-pentopyranos-4-ulose + CO2 + NADH. The catalysed reaction is UDP-4-amino-4-deoxy-beta-L-arabinose + (6R)-10-formyltetrahydrofolate = UDP-4-deoxy-4-formamido-beta-L-arabinose + (6S)-5,6,7,8-tetrahydrofolate + H(+). It functions in the pathway nucleotide-sugar biosynthesis; UDP-4-deoxy-4-formamido-beta-L-arabinose biosynthesis; UDP-4-deoxy-4-formamido-beta-L-arabinose from UDP-alpha-D-glucuronate: step 1/3. It participates in nucleotide-sugar biosynthesis; UDP-4-deoxy-4-formamido-beta-L-arabinose biosynthesis; UDP-4-deoxy-4-formamido-beta-L-arabinose from UDP-alpha-D-glucuronate: step 3/3. Its pathway is bacterial outer membrane biogenesis; lipopolysaccharide biosynthesis. In terms of biological role, bifunctional enzyme that catalyzes the oxidative decarboxylation of UDP-glucuronic acid (UDP-GlcUA) to UDP-4-keto-arabinose (UDP-Ara4O) and the addition of a formyl group to UDP-4-amino-4-deoxy-L-arabinose (UDP-L-Ara4N) to form UDP-L-4-formamido-arabinose (UDP-L-Ara4FN). The modified arabinose is attached to lipid A and is required for resistance to polymyxin and cationic antimicrobial peptides. The protein is Bifunctional polymyxin resistance protein ArnA of Salmonella heidelberg (strain SL476).